Reading from the N-terminus, the 461-residue chain is Argininosuccinate lyase (461 aa).

3 residues coordinate 2-(N(omega)-L-arginino)succinate: serine 28, asparagine 115, and threonine 160. The active-site Proton acceptor is histidine 161. Serine 282 (proton donor) is an active-site residue. Positions 290, 322, 327, and 330 each coordinate 2-(N(omega)-L-arginino)succinate.

This sequence belongs to the lyase 1 family. Argininosuccinate lyase subfamily. As to quaternary structure, homotetramer.

It carries out the reaction 2-(N(omega)-L-arginino)succinate = fumarate + L-arginine. It functions in the pathway amino-acid biosynthesis; L-arginine biosynthesis; L-arginine from L-ornithine and carbamoyl phosphate: step 3/3. The sequence is that of Argininosuccinate lyase (arg7) from Schizosaccharomyces pombe (strain 972 / ATCC 24843) (Fission yeast).